The following is a 474-amino-acid chain: Fumarate hydratase class II (474 aa).

Substrate-binding positions include 104–106 (SGT), 128–131 (HPND), 138–140 (SSN), and Thr186. His187 functions as the Proton donor/acceptor in the catalytic mechanism. Residue Ser318 is part of the active site. Substrate is bound by residues Ser319 and 324–326 (KVN).

This sequence belongs to the class-II fumarase/aspartase family. Fumarase subfamily. As to quaternary structure, homotetramer.

The protein resides in the cytoplasm. It catalyses the reaction (S)-malate = fumarate + H2O. It participates in carbohydrate metabolism; tricarboxylic acid cycle; (S)-malate from fumarate: step 1/1. Involved in the TCA cycle. Catalyzes the stereospecific interconversion of fumarate to L-malate. The polypeptide is Fumarate hydratase class II (Mycobacterium bovis (strain ATCC BAA-935 / AF2122/97)).